Consider the following 91-residue polypeptide: MKLSCLSLALAIILILAIVHSPNMEVKALADPEADAFGEANAFGEADAFAEANADVKGMKKAIKEILDCVIEKGYDKLAAKLKKVIQQLWE.

Positions 1-21 (MKLSCLSLALAIILILAIVHS) are cleaved as a signal peptide. Residues 22–54 (PNMEVKALADPEADAFGEANAFGEADAFAEANA) constitute a propeptide that is removed on maturation.

As to quaternary structure, homodimer; disulfide-linked. In terms of tissue distribution, expressed by the venom gland and reservoir.

It is found in the secreted. In terms of biological role, causes a significant and dose-dependent histamine release, probably by influencing the signal transduction of mast cells through a non-IgE-mediated pathway. This peptide does not have cytotoxic activities. The polypeptide is M-myrmeciitoxin-Mb3a (Myrmecia banksi (Jack jumper ant)).